A 262-amino-acid chain; its full sequence is Ribosomal RNA small subunit methyltransferase A (262 aa).

S-adenosyl-L-methionine-binding residues include asparagine 12, leucine 14, glycine 38, glutamate 60, aspartate 83, and asparagine 102.

The protein belongs to the class I-like SAM-binding methyltransferase superfamily. rRNA adenine N(6)-methyltransferase family. RsmA subfamily.

It localises to the cytoplasm. It catalyses the reaction adenosine(1518)/adenosine(1519) in 16S rRNA + 4 S-adenosyl-L-methionine = N(6)-dimethyladenosine(1518)/N(6)-dimethyladenosine(1519) in 16S rRNA + 4 S-adenosyl-L-homocysteine + 4 H(+). Its function is as follows. Specifically dimethylates two adjacent adenosines (A1518 and A1519) in the loop of a conserved hairpin near the 3'-end of 16S rRNA in the 30S particle. May play a critical role in biogenesis of 30S subunits. This Pelagibacter ubique (strain HTCC1062) protein is Ribosomal RNA small subunit methyltransferase A.